The sequence spans 418 residues: ML-236A carboxylate methylbutanoyltransferase mlcH (418 aa).

Arg-78 provides a ligand contact to monacolin J. Catalysis depends on Ser-81, which acts as the Acyl-ester intermediate. Residues Arg-178, Tyr-193, and Tyr-262 each contribute to the monacolin J site. Gly-370 provides a ligand contact to 2-methylbutanoate.

Belongs to the class-A beta-lactamase family.

The enzyme catalyses ML-236A carboxylate + (S)-2-methylbutanoyl-[2-methylbutanoate polyketide synthase] = mevinic carboxylate + holo-[2-methylbutanoate polyketide synthase]. The protein operates within polyketide biosynthesis. Its function is as follows. Compactin diketide synthase; part of the gene cluster that mediates the biosynthesis of compactin, also known as mevastatin or ML-236B, and which acts as a potent competitive inhibitor of HMG-CoA reductase. Compactin biosynthesis is performed in two stages. The first stage is catalyzed by the nonaketide synthase mlcA, which belongs to type I polyketide synthases and catalyzes the iterative nine-step formation of the polyketide. This PKS stage is completed by the action of dehydrogenase mlcG, which catalyzes the NADPH-dependent reduction of the unsaturated tetra-, penta- and heptaketide intermediates that arise during the mlcA-mediated biosynthesis of the nonaketide chain and leads to dihydro-ML-236C carboxylate. Covalently bound dihydro-ML-236C carboxylate is released from mlcA by the mlcF esterase. Conversion of dihydro-ML-236C carboxylate into ML-236A carboxylate is subsequently performed with the participation of molecular oxygen and P450 monoogygenase mlcC. Finally, mlcH performs the conversion of ML-236A carboxylate to ML-236B/compactin carboxylate through the addition of the side-chain diketide moiety produced by the diketide synthase mlcB. This Penicillium citrinum protein is ML-236A carboxylate methylbutanoyltransferase mlcH.